Reading from the N-terminus, the 128-residue chain is Fluoride-specific ion channel FluC (128 aa).

A run of 4 helical transmembrane segments spans residues 5-25 (ALVA…SMVI), 32-52 (TFPW…GLFA), 70-90 (FFMV…LQTL), and 106-126 (VGSV…ATII). G77 and T80 together coordinate Na(+).

This sequence belongs to the fluoride channel Fluc/FEX (TC 1.A.43) family.

The protein resides in the cell inner membrane. The catalysed reaction is fluoride(in) = fluoride(out). With respect to regulation, na(+) is not transported, but it plays an essential structural role and its presence is essential for fluoride channel function. Fluoride-specific ion channel. Important for reducing fluoride concentration in the cell, thus reducing its toxicity. The sequence is that of Fluoride-specific ion channel FluC from Paramagnetospirillum magneticum (strain ATCC 700264 / AMB-1) (Magnetospirillum magneticum).